The primary structure comprises 393 residues: Methyltransferase-like protein 22 (393 aa).

The disordered stretch occupies residues 54–87 (WTDSGAEDSGPTDVSTEEMPPAGSGSGHSHEDLS). Ser-120 is subject to Phosphoserine.

The protein belongs to the methyltransferase superfamily. METTL22 family. In terms of assembly, interacts with members of the heat shock protein 90 and 70 families; these proteins probably are methylation substrates.

Its subcellular location is the nucleus. The enzyme catalyses L-lysyl-[protein] + 3 S-adenosyl-L-methionine = N(6),N(6),N(6)-trimethyl-L-lysyl-[protein] + 3 S-adenosyl-L-homocysteine + 3 H(+). Functionally, protein N-lysine methyltransferase. Trimethylates KIN at Lys-135 (in vitro). This is Methyltransferase-like protein 22 (Mettl22) from Mus musculus (Mouse).